A 117-amino-acid chain; its full sequence is MDKKASRIRRATRARRKIAELGATRLVVHRTPRHVYAQVIAANGSEVIAAASTVEKAIREQVKYTGNIEAAKAVGKAVAERALEKGVSTVAFDRSGFQYHGRVAALADSAREAGLKF.

Belongs to the universal ribosomal protein uL18 family. In terms of assembly, part of the 50S ribosomal subunit; part of the 5S rRNA/L5/L18/L25 subcomplex. Contacts the 5S and 23S rRNAs.

This is one of the proteins that bind and probably mediate the attachment of the 5S RNA into the large ribosomal subunit, where it forms part of the central protuberance. The sequence is that of Large ribosomal subunit protein uL18 from Vibrio vulnificus (strain CMCP6).